We begin with the raw amino-acid sequence, 459 residues long: Ribulose bisphosphate carboxylase large chain (459 aa).

An N6,N6,N6-trimethyllysine modification is found at lysine 4. Asparagine 113 and threonine 163 together coordinate substrate. Residue lysine 165 is the Proton acceptor of the active site. Lysine 167 contributes to the substrate binding site. Residues lysine 191, aspartate 193, and glutamate 194 each contribute to the Mg(2+) site. Lysine 191 is modified (N6-carboxylysine). Histidine 284 serves as the catalytic Proton acceptor. Substrate-binding residues include arginine 285, histidine 317, and serine 369.

It belongs to the RuBisCO large chain family. Type I subfamily. As to quaternary structure, heterohexadecamer of 8 large chains and 8 small chains; disulfide-linked. The disulfide link is formed within the large subunit homodimers. The cofactor is Mg(2+). Post-translationally, the disulfide bond which can form in the large chain dimeric partners within the hexadecamer appears to be associated with oxidative stress and protein turnover.

It is found in the plastid. The protein localises to the chloroplast. The enzyme catalyses 2 (2R)-3-phosphoglycerate + 2 H(+) = D-ribulose 1,5-bisphosphate + CO2 + H2O. It catalyses the reaction D-ribulose 1,5-bisphosphate + O2 = 2-phosphoglycolate + (2R)-3-phosphoglycerate + 2 H(+). RuBisCO catalyzes two reactions: the carboxylation of D-ribulose 1,5-bisphosphate, the primary event in carbon dioxide fixation, as well as the oxidative fragmentation of the pentose substrate in the photorespiration process. Both reactions occur simultaneously and in competition at the same active site. This is Ribulose bisphosphate carboxylase large chain from Morus alba (White mulberry).